Here is a 247-residue protein sequence, read N- to C-terminus: Large ribosomal subunit protein uL30 (247 aa).

Methionine 1 is modified (N-acetylmethionine). Tandem repeats lie at residues 7 to 17 (KKKVPAVPETL), 18 to 29 (KKKRRNFAELKI), 30 to 41 (KRLRKKFAQKML), and 42 to 53 (RKARRKLIYEKA). The tract at residues 7-53 (KKKVPAVPETLKKKRRNFAELKIKRLRKKFAQKMLRKARRKLIYEKA) is 4 X 12 AA tandem repeats. Threonine 16 bears the Phosphothreonine mark. Lysine 123 is modified (N6-acetyllysine). Lysine 126 is modified (N6-succinyllysine). Tyrosine 138 bears the Phosphotyrosine mark.

It belongs to the universal ribosomal protein uL30 family. Component of the large ribosomal subunit. Homodimer. Interacts with DHX33.

Its subcellular location is the cytoplasm. Component of the large ribosomal subunit. The ribosome is a large ribonucleoprotein complex responsible for the synthesis of proteins in the cell. Binds to G-rich structures in 28S rRNA and in mRNAs. Plays a regulatory role in the translation apparatus; inhibits cell-free translation of mRNAs. The sequence is that of Large ribosomal subunit protein uL30 (RPL7) from Pongo abelii (Sumatran orangutan).